Reading from the N-terminus, the 1385-residue chain is DNA-directed RNA polymerase subunit beta (1385 aa).

Belongs to the RNA polymerase beta chain family. The RNAP catalytic core consists of 2 alpha, 1 beta, 1 beta' and 1 omega subunit. When a sigma factor is associated with the core the holoenzyme is formed, which can initiate transcription.

The catalysed reaction is RNA(n) + a ribonucleoside 5'-triphosphate = RNA(n+1) + diphosphate. In terms of biological role, DNA-dependent RNA polymerase catalyzes the transcription of DNA into RNA using the four ribonucleoside triphosphates as substrates. The chain is DNA-directed RNA polymerase subunit beta from Sulfurovum sp. (strain NBC37-1).